A 479-amino-acid polypeptide reads, in one-letter code: Poly(A) polymerase catalytic subunit (479 aa).

Catalysis depends on residues D202 and D204. The Ca(2+) site is built by D202, D204, and D253.

It belongs to the poxviridae poly(A) polymerase catalytic subunit family. In terms of assembly, heterodimer of a large (catalytic) subunit and a small (regulatory) subunit.

It carries out the reaction RNA(n) + ATP = RNA(n)-3'-adenine ribonucleotide + diphosphate. Polymerase that creates the 3'-poly(A) tail of mRNA's. In Homo sapiens (Human), this protein is Poly(A) polymerase catalytic subunit (OPG063).